The following is a 444-amino-acid chain: Trigger factor (444 aa).

The region spanning 163–248 is the PPIase FKBP-type domain; that stretch reads GDFLTVDFVG…AKALKKAVAP (86 aa).

This sequence belongs to the FKBP-type PPIase family. Tig subfamily.

The protein localises to the cytoplasm. It catalyses the reaction [protein]-peptidylproline (omega=180) = [protein]-peptidylproline (omega=0). Its function is as follows. Involved in protein export. Acts as a chaperone by maintaining the newly synthesized protein in an open conformation. Functions as a peptidyl-prolyl cis-trans isomerase. The chain is Trigger factor from Granulibacter bethesdensis (strain ATCC BAA-1260 / CGDNIH1).